The sequence spans 347 residues: GMP reductase (347 aa).

108-131 (ADFQKTKDIMALTDDLIFICVDIA) is a binding site for NADP(+). Gly181 and Gly183 together coordinate K(+). The active-site Thioimidate intermediate is Cys186. 216-239 (IIGDGGCSCAGDVSKAFGGGADFV) is a binding site for NADP(+).

This sequence belongs to the IMPDH/GMPR family. GuaC type 1 subfamily. Homotetramer.

The catalysed reaction is IMP + NH4(+) + NADP(+) = GMP + NADPH + 2 H(+). Its function is as follows. Catalyzes the irreversible NADPH-dependent deamination of GMP to IMP. It functions in the conversion of nucleobase, nucleoside and nucleotide derivatives of G to A nucleotides, and in maintaining the intracellular balance of A and G nucleotides. The sequence is that of GMP reductase from Aliivibrio salmonicida (strain LFI1238) (Vibrio salmonicida (strain LFI1238)).